We begin with the raw amino-acid sequence, 391 residues long: Coiled-coil domain-containing protein 85C (391 aa).

Coiled-coil stretches lie at residues 19–86 (EELL…RELC) and 116–146 (KEVG…KEII). 2 disordered regions span residues 155–238 (GAGS…LNDS) and 278–303 (PYHS…TRVT). Over residues 157–175 (GSRSSIDSQNSLTNLNGSS) the composition is skewed to polar residues. Over residues 182–194 (DGSSTSSTGSAGS) the composition is skewed to low complexity. Polar residues predominate over residues 280–303 (HSESQLSPLPQYQEPLQNGSTRVT).

This sequence belongs to the CCDC85 family.

The protein resides in the cell junction. It localises to the tight junction. It is found in the adherens junction. Its function is as follows. May play a role in cell-cell adhesion and epithelium development through its interaction with proteins of the beta-catenin family. May play an important role in cortical development, especially in the maintenance of radial glia. The chain is Coiled-coil domain-containing protein 85C (ccdc85c) from Xenopus tropicalis (Western clawed frog).